The sequence spans 284 residues: NAD kinase (284 aa).

The active-site Proton acceptor is the D67. NAD(+) is bound by residues 67-68 (DG), 141-142 (ND), R152, K169, D171, 182-187 (TGYSLS), and Q241.

The protein belongs to the NAD kinase family. It depends on a divalent metal cation as a cofactor.

It is found in the cytoplasm. It carries out the reaction NAD(+) + ATP = ADP + NADP(+) + H(+). In terms of biological role, involved in the regulation of the intracellular balance of NAD and NADP, and is a key enzyme in the biosynthesis of NADP. Catalyzes specifically the phosphorylation on 2'-hydroxyl of the adenosine moiety of NAD to yield NADP. The sequence is that of NAD kinase from Geotalea daltonii (strain DSM 22248 / JCM 15807 / FRC-32) (Geobacter daltonii).